The following is a 201-amino-acid chain: L(+)-tartrate dehydratase subunit beta (201 aa).

H37 is an active-site residue.

Belongs to the class-I fumarase family. Heterotetramer of two alpha and two beta subunits.

The enzyme catalyses (2R,3R)-tartrate = oxaloacetate + H2O. The protein is L(+)-tartrate dehydratase subunit beta (ttdB) of Escherichia coli O6:K15:H31 (strain 536 / UPEC).